The primary structure comprises 271 residues: Formamidopyrimidine-DNA glycosylase (271 aa).

Proline 2 acts as the Schiff-base intermediate with DNA in catalysis. The Proton donor role is filled by glutamate 3. Lysine 58 (proton donor; for beta-elimination activity) is an active-site residue. DNA is bound by residues histidine 92, arginine 111, and arginine 152. The FPG-type zinc-finger motif lies at 237-271 (MVYGREGEACRHCGGELKHATIGQRATVWCAACQR). The active-site Proton donor; for delta-elimination activity is the arginine 261.

This sequence belongs to the FPG family. As to quaternary structure, monomer. Zn(2+) is required as a cofactor.

It catalyses the reaction Hydrolysis of DNA containing ring-opened 7-methylguanine residues, releasing 2,6-diamino-4-hydroxy-5-(N-methyl)formamidopyrimidine.. The enzyme catalyses 2'-deoxyribonucleotide-(2'-deoxyribose 5'-phosphate)-2'-deoxyribonucleotide-DNA = a 3'-end 2'-deoxyribonucleotide-(2,3-dehydro-2,3-deoxyribose 5'-phosphate)-DNA + a 5'-end 5'-phospho-2'-deoxyribonucleoside-DNA + H(+). In terms of biological role, involved in base excision repair of DNA damaged by oxidation or by mutagenic agents. Acts as a DNA glycosylase that recognizes and removes damaged bases. Has a preference for oxidized purines, such as 7,8-dihydro-8-oxoguanine (8-oxoG). Has AP (apurinic/apyrimidinic) lyase activity and introduces nicks in the DNA strand. Cleaves the DNA backbone by beta-delta elimination to generate a single-strand break at the site of the removed base with both 3'- and 5'-phosphates. The sequence is that of Formamidopyrimidine-DNA glycosylase from Xanthomonas campestris pv. campestris (strain ATCC 33913 / DSM 3586 / NCPPB 528 / LMG 568 / P 25).